The following is a 465-amino-acid chain: Soluble pyridine nucleotide transhydrogenase (465 aa).

Glu36–Cys45 is an FAD binding site.

This sequence belongs to the class-I pyridine nucleotide-disulfide oxidoreductase family. FAD is required as a cofactor.

It is found in the cytoplasm. It carries out the reaction NAD(+) + NADPH = NADH + NADP(+). In terms of biological role, conversion of NADPH, generated by peripheral catabolic pathways, to NADH, which can enter the respiratory chain for energy generation. The polypeptide is Soluble pyridine nucleotide transhydrogenase (Serratia proteamaculans (strain 568)).